A 248-amino-acid chain; its full sequence is Adenosylcobinamide-GDP ribazoletransferase (248 aa).

Transmembrane regions (helical) follow at residues 3–23, 35–55, 63–83, 109–129, 135–155, 180–199, 200–219, and 228–248; these read ELKALILSIQFMTGIPIPINI, SYFPVVGLLIGGILYIAYLLL, IVMTFLVAFSYILTRGMHIDG, LGTNGVLALVFMVILKILFLS, LLFSALLVSPVIARLSVVFSI, FVIALLISTIAGYFVMPLKD, LALLYVISLSFTCLISKYIS, and DTLGAVNEFVELIAFIYFSIL.

Belongs to the CobS family. Mg(2+) serves as cofactor.

It is found in the cell membrane. The catalysed reaction is alpha-ribazole + adenosylcob(III)inamide-GDP = adenosylcob(III)alamin + GMP + H(+). The enzyme catalyses alpha-ribazole 5'-phosphate + adenosylcob(III)inamide-GDP = adenosylcob(III)alamin 5'-phosphate + GMP + H(+). Its pathway is cofactor biosynthesis; adenosylcobalamin biosynthesis; adenosylcobalamin from cob(II)yrinate a,c-diamide: step 7/7. Joins adenosylcobinamide-GDP and alpha-ribazole to generate adenosylcobalamin (Ado-cobalamin). Also synthesizes adenosylcobalamin 5'-phosphate from adenosylcobinamide-GDP and alpha-ribazole 5'-phosphate. The chain is Adenosylcobinamide-GDP ribazoletransferase from Caldanaerobacter subterraneus subsp. tengcongensis (strain DSM 15242 / JCM 11007 / NBRC 100824 / MB4) (Thermoanaerobacter tengcongensis).